The chain runs to 196 residues: Acyl-homoserine-lactone synthase (196 aa).

It belongs to the autoinducer synthase family.

It carries out the reaction a fatty acyl-[ACP] + S-adenosyl-L-methionine = an N-acyl-L-homoserine lactone + S-methyl-5'-thioadenosine + holo-[ACP] + H(+). Its function is as follows. Required for the synthesis of a yet unknown N-aceyl-homoserine lactone (N-aceyl-HSL), an autoinducer molecule which binds to PhzR and thus regulates phenazine production. This Pseudomonas chlororaphis (Pseudomonas aureofaciens) protein is Acyl-homoserine-lactone synthase (phzI).